Here is a 153-residue protein sequence, read N- to C-terminus: Ribosomal RNA large subunit methyltransferase H (153 aa).

Residues Leu75, Gly102, and 121–126 (LSPLTM) contribute to the S-adenosyl-L-methionine site.

This sequence belongs to the RNA methyltransferase RlmH family. Homodimer.

Its subcellular location is the cytoplasm. The enzyme catalyses pseudouridine(1915) in 23S rRNA + S-adenosyl-L-methionine = N(3)-methylpseudouridine(1915) in 23S rRNA + S-adenosyl-L-homocysteine + H(+). Functionally, specifically methylates the pseudouridine at position 1915 (m3Psi1915) in 23S rRNA. In Nitratiruptor sp. (strain SB155-2), this protein is Ribosomal RNA large subunit methyltransferase H.